Here is a 346-residue protein sequence, read N- to C-terminus: MTSVRKTMELIKELVSIPSPTGNTYEVINYIESLLKEWKVETVRNHKGGLIATLPGRDTSRHRMLTAHVDTLGAMVKEIKADGRLKIDLIGGFRYNSIEGEYCQIETASGKMYTGTILMHQTSVHVYKDAGKAERNQENMEIRLDEPVHCRKDTEELGIGVGDFVSFDPRVEITSSGFIKSRHLDDKASVALLLRLIHEIQTEDIELPYTTHFLISNNEEIGYGGNSNIPPETVEYLAVDMGAIGDGQATDEYSVSICVKDASGPYHYQLRKHLVQLAEKHHIDYKLDIYPYYGSDASAAIKSGHDIVHGLIGPGIDASHAFERTHKSSLRHTAKLLYYYVQSPMV.

His68 and Asp185 together coordinate a divalent metal cation. Glu219 functions as the Proton acceptor in the catalytic mechanism. A divalent metal cation is bound by residues Glu220, Asp240, and His320.

Belongs to the peptidase M42 family. The cofactor is a divalent metal cation.

The sequence is that of Putative aminopeptidase YhfE (yhfE) from Bacillus subtilis (strain 168).